The chain runs to 142 residues: Large ribosomal subunit protein uL13 (142 aa).

This sequence belongs to the universal ribosomal protein uL13 family. In terms of assembly, part of the 50S ribosomal subunit.

Its function is as follows. This protein is one of the early assembly proteins of the 50S ribosomal subunit, although it is not seen to bind rRNA by itself. It is important during the early stages of 50S assembly. The polypeptide is Large ribosomal subunit protein uL13 (Idiomarina loihiensis (strain ATCC BAA-735 / DSM 15497 / L2-TR)).